We begin with the raw amino-acid sequence, 197 residues long: TATA-box-binding protein (197 aa).

2 repeat units span residues 10–86 and 101–177.

It belongs to the TBP family.

Functionally, general factor that plays a role in the activation of archaeal genes transcribed by RNA polymerase. Binds specifically to the TATA box promoter element which lies close to the position of transcription initiation. The chain is TATA-box-binding protein from Pyrobaculum neutrophilum (strain DSM 2338 / JCM 9278 / NBRC 100436 / V24Sta) (Thermoproteus neutrophilus).